The sequence spans 220 residues: Claudin-22 (220 aa).

The Cytoplasmic portion of the chain corresponds to 1-10 (MALVFRTVAQ). The chain crosses the membrane as a helical span at residues 11 to 30 (LAGVSLSLLGWVLSCLTNYL). Residues 31–81 (PHWKNLNLDLNEMENWTMGLWQTCVIQEEVGMQCKDFDSFLALPAELRVSR) are Extracellular-facing. Residues 82–102 (ILMFLSNGLGFLGLLVSGFGL) traverse the membrane as a helical segment. Over 103 to 117 (DCLRIGESQRDLKRR) the chain is Cytoplasmic. Residues 118-138 (LLILGGILSWASGVTALVPVS) form a helical membrane-spanning segment. Residues 139-164 (WVAHKTVQEFWDENVPDFVPRWEFGE) are Extracellular-facing. The helical transmembrane segment at 165–185 (ALFLGWFAGLSLLLGGCLLHC) threads the bilayer. Over 186-220 (AACSSHAPLASGHYAVAQTQDHHQELETRNTNLKH) the chain is Cytoplasmic.

The protein belongs to the claudin family.

It is found in the cell junction. It localises to the tight junction. Its subcellular location is the cell membrane. Functionally, plays a major role in tight junction-specific obliteration of the intercellular space, through calcium-independent cell-adhesion activity. This Homo sapiens (Human) protein is Claudin-22 (CLDN22).